The sequence spans 155 residues: Glutaredoxin-related protein 5, mitochondrial (155 aa).

The transit peptide at 1–14 directs the protein to the mitochondrion; it reads MNSVFRSTARCLRS. A Glutaredoxin domain is found at 42–145; sequence QKNLEEMVKK…EELQKLGIRS (104 aa). Residue Lys59 participates in glutathione binding. A [2Fe-2S] cluster-binding site is contributed by Cys67. Glutathione contacts are provided by residues 97–101, Ile109, and 122–123; these read RQGIK and CD.

In terms of assembly, homodimer.

It localises to the mitochondrion. Functionally, monothiol glutaredoxin involved in mitochondrial iron-sulfur (Fe/S) cluster transfer. Receives iron-sulfur clusters from scaffold protein ISCU and mediates their transfer to apoproteins, to the 4Fe/FS cluster biosynthesis machinery, or export from mitochondrion. Required for normal hemoglobin biosynthesis. In Danio rerio (Zebrafish), this protein is Glutaredoxin-related protein 5, mitochondrial (glrx5).